The primary structure comprises 333 residues: Potassium channel protein 1 (333 aa).

The Cytoplasmic portion of the chain corresponds to M1–K6. A helical membrane pass occupies residues I7–T27. Residues V28–K60 are Extracellular-facing. A Selectivity filter motif is present at residues T46–D51. A helical transmembrane segment spans residues L61–I81. Topologically, residues A82 to E333 are cytoplasmic. Positions N107–I229 constitute an RCK N-terminal domain. In terms of domain architecture, RCK C-terminal spans E246–G331.

As to quaternary structure, homotetramer.

It is found in the cell membrane. Functionally, potassium channel protein. Seems to conduct potassium at low membrane potentials. The polypeptide is Potassium channel protein 1 (Methanocaldococcus jannaschii (strain ATCC 43067 / DSM 2661 / JAL-1 / JCM 10045 / NBRC 100440) (Methanococcus jannaschii)).